The primary structure comprises 2002 residues: Methylcytosine dioxygenase TET2 (2002 aa).

The segment covering 1 to 11 has biased composition (basic and acidic residues); it reads MEQDRTNHVEG. The segment at 1-22 is disordered; sequence MEQDRTNHVEGNRLSPFLIPSP. Phosphoserine occurs at positions 15, 75, and 99. Residues 113–124 show a composition bias toward basic and acidic residues; that stretch reads KQDQKANGERRN. 7 disordered regions span residues 113–154, 266–287, 349–368, 390–488, 703–748, 930–949, and 1075–1095; these read KQDQ…VSSV, HPSH…LPPK, GEEF…GSSE, DSFS…VNRN, LNQQ…QQKL, VPDQ…TQKH, and DSHT…PTKR. 2 stretches are compositionally biased toward polar residues: residues 126–143 and 267–283; these read GVSQ…NVSD and PSHT…SNSE. The span at 397–416 shows a compositional bias: pro residues; it reads TPPPPSQLLLSPPPPLPQVP. 2 stretches are compositionally biased toward polar residues: residues 479–488 and 703–718; these read RPQNNCVNRN and LNQQ…NSHL. A compositionally biased stretch (low complexity) spans 731–748; sequence QPSQSSHLPQNQQQQQKL. Composition is skewed to polar residues over residues 935 to 944 and 1081 to 1095; these read GSHTQTPPQK and LEQQ…PTKR. 2 positions are modified to phosphoserine: S1107 and S1109. Zn(2+) is bound by residues C1133, C1135, C1193, H1219, and C1221. R1261 is a binding site for 2-oxoglutarate. Residues C1271, C1273, C1289, and C1298 each coordinate Zn(2+). The segment at 1290–1303 is interaction with DNA; it reads SWSMYYNGCKFARS. A Glycyl lysine isopeptide (Lys-Gly) (interchain with G-Cter in ubiquitin) cross-link involves residue K1299. C1358 contacts Zn(2+). C1374 lines the 2-oxoglutarate pocket. Residue H1380 participates in Zn(2+) binding. Positions 1382 and 1384 each coordinate Fe cation. Substrate is bound at residue N1387. Residue H1416 participates in 2-oxoglutarate binding. 2 disordered regions span residues 1475 to 1507 and 1521 to 1587; these read AAEK…NASQ and VMQQ…HTSD. A compositionally biased stretch (low complexity) spans 1477-1487; it reads EKLSSLENSSN. Positions 1496–1507 are enriched in polar residues; that stretch reads PSRTKQTENASQ. 2 stretches are compositionally biased toward low complexity: residues 1523-1532 and 1539-1551; these read QQSQQPQPLQ and QQQQ…QPHH. Residues 1554–1568 show a composition bias toward polar residues; that stretch reads TESVNSYSASGSTNP. R1682 carries the post-translational modification Asymmetric dimethylarginine. Residue H1881 participates in Fe cation binding. Residue 1896–1898 coordinates 2-oxoglutarate; that stretch reads RIS. 1902-1904 serves as a coordination point for substrate; sequence YQH. H1912 lines the Zn(2+) pocket. The disordered stretch occupies residues 1932–1961; that stretch reads CEKYGPDYVPQKSHGKKVKREPAEPHETSE. Residues 1951–1960 are compositionally biased toward basic and acidic residues; that stretch reads REPAEPHETS.

This sequence belongs to the TET family. Interacts with HCFC1. Interacts with OGT. Interacts with PROSER1; this interaction mediates TET2 O-GlcNAcylation and stability by promoting the interaction between OGT and TET2. Directly interacts (via C-terminus) with the DCAF1 component of the CRL4(VprBP) E3 ubiquitin-protein ligase complex. Fe(2+) serves as cofactor. The cofactor is Zn(2+). In terms of processing, may be glycosylated. It is unclear whether interaction with OGT leads to GlcNAcylation. According to a report, it is not GlcNAcylated by OGT. In contrast, another group reports GlcNAcylation by OGT in mouse ortholog. Monoubiquitinated at Lys-1299 by the DCX (DDB1-CUL4-X-box) E3 ubiquitin-protein ligase complex called CRL4(VprBP) or CUL4A-RBX1-DDB1-DCAF1/VPRBP complex; this modification promotes binding to DNA. Post-translationally, acetylated. Deacetylase HDAC6 acts as a valine sensor by binding to valine through its primate-specific SE14 repeat region and deacetylates TET2 following valine deprivation which promotes TET2-dependent DNA demethylation. In terms of tissue distribution, broadly expressed. Highly expressed in hematopoietic cells; highest expression observed in granulocytes. Expression is reduced in granulocytes from peripheral blood of patients affected by myelodysplastic syndromes.

It localises to the nucleus. Its subcellular location is the chromosome. The catalysed reaction is a 5-methyl-2'-deoxycytidine in DNA + 2-oxoglutarate + O2 = a 5-hydroxymethyl-2'-deoxycytidine in DNA + succinate + CO2. It carries out the reaction a 5-hydroxymethyl-2'-deoxycytidine in DNA + 2-oxoglutarate + O2 = a 5-formyl-2'-deoxycytidine in DNA + succinate + CO2 + H2O. The enzyme catalyses a 5-formyl-2'-deoxycytidine in DNA + 2-oxoglutarate + O2 = a 5-carboxyl-2'-deoxycytidine in DNA + succinate + CO2 + H(+). Functionally, dioxygenase that catalyzes the conversion of the modified genomic base 5-methylcytosine (5mC) into 5-hydroxymethylcytosine (5hmC) and plays a key role in active DNA demethylation. Has a preference for 5-hydroxymethylcytosine in CpG motifs. Also mediates subsequent conversion of 5hmC into 5-formylcytosine (5fC), and conversion of 5fC to 5-carboxylcytosine (5caC). Conversion of 5mC into 5hmC, 5fC and 5caC probably constitutes the first step in cytosine demethylation. Methylation at the C5 position of cytosine bases is an epigenetic modification of the mammalian genome which plays an important role in transcriptional regulation. In addition to its role in DNA demethylation, also involved in the recruitment of the O-GlcNAc transferase OGT to CpG-rich transcription start sites of active genes, thereby promoting histone H2B GlcNAcylation by OGT. This is Methylcytosine dioxygenase TET2 (TET2) from Homo sapiens (Human).